The sequence spans 514 residues: Myocyte-specific enhancer factor 2D (514 aa).

The MADS-box domain occupies 3–57; the sequence is RKKIQIQRITDERNRQVTFTKRKFGLMKKAYELSVLCDCEIALIIFNHSNKLFQY. The mef2-type DNA-binding region spans 58-86; that stretch reads ASTDMDKVLLKYTEYNEPHESRTNADIIE. D97, S98, and S106 each carry phosphoserine. Phosphothreonine is present on L107. A Phosphoserine modification is found at S110. S121 is modified (phosphoserine; by PKA). Residues 174 to 207 are disordered; that stretch reads TDPRLLSPQQPALQRNSVSPGLPQRPASAGAMLG. Phosphoserine; by MAPK7 is present on S180. The span at 180–192 shows a compositional bias: polar residues; sequence SPQQPALQRNSVS. S190 bears the Phosphoserine; by PKA mark. S231 is modified (phosphoserine). The interval 244-269 is disordered; sequence NKVIPAKSPPPPTHNTQLGAPSRKPD. K245 is subject to N6-acetyllysine. S251 bears the Phosphoserine mark. Residues 286–292 form a beta domain region; sequence TEDHLDL. Disordered stretches follow at residues 364–399 and 430–514; these read WQQPQPPQQPQPPQPPQSQPQPPQPQPQQPPQQQPH and SIKS…WTLK. A compositionally biased stretch (pro residues) spans 367–396; that stretch reads PQPPQQPQPPQPPQSQPQPPQPQPQQPPQQ. K432 carries the N6-acetyllysine; alternate modification. K432 participates in a covalent cross-link: Glycyl lysine isopeptide (Lys-Gly) (interchain with G-Cter in SUMO); alternate. S437 is subject to Phosphoserine.

This sequence belongs to the MEF2 family. In terms of assembly, forms a complex with class II HDACs in undifferentiating cells. On myogenic differentiation, HDACs are released into the cytoplasm allowing MEF2s to interact with other proteins for activation. Interacts with HDAC4 (in undifferentiating cells); the interaction translocates MEF2D to nuclear dots. Forms a heterodimer with MEF2A. Interacts with MAPK7; the interaction phosphorylates but does not activate MEF2D. Interacts with MYOG. Interacts with CCAR2 and HDAC3. Post-translationally, phosphorylated on Ser-437 is which is required for Lys-432 sumoylation and inhibits transcriptional activity. Phosphorylation on this residue by CDK5 is dependent on p35 and calpains. Phosphorylated by PKA at Ser-121 and Ser-190 represses transcriptional activity in embryonic and postnatal skeletal muscle, and stabilizes protein levels. No in vitro phosphorylation by PKA on Thr-20. Phosphorylated and activated by CaMK4. In terms of processing, acetylated on Lys-432 by CREBBP. Acetylated by EP300. Deacetylated by SIRT1 and HDAC3. Sumoylated on Lys-432 with SUMO2 but not SUMO1; which inhibits transcriptional activity and myogenic activity. Desumoylated by SENP3. Post-translationally, proteolytically cleaved in cerebellar granule neurons by caspase 7 following neurotoxicity. Preferentially cleaves the CDK5-mediated hyperphosphorylated form which leads to neuron apoptosis and transcriptional inactivation. Widely expressed though mainly restricted to skeletal and cardiac muscle, brain, neurons and lymphocytes. Differentially expressed depending on if isoforms contain the beta domain or not, with the total expression of the beta domain-lacking isoforms vastly exceeding that of the beta domain-containing isoforms. Isoforms containing the beta domain are expressed primarily in skeletal and cardiac muscle and in brain. Also present in lung and testis. Splicing to include the beta domain is induced in differentiating myocytes. Isoforms lacking the beta domain are expressed less abundantly in skeletal muscle, brain and lymphocytes, and are uniquely found in ovary, liver, spleen and kidney. In embryos, the beta domain-containing and beta domain-lacking isoforms are equally expressed. Also expressed cerebellar granule neurons and other regions of the CNS. Highest levels in the olfactory bulb, cortex, hippocampus, thalamus and cerebellum.

It is found in the nucleus. Its function is as follows. Transcriptional activator which binds specifically to the MEF2 element, 5'-YTA[AT](4)TAR-3', found in numerous muscle-specific, growth factor- and stress-induced genes. Mediates cellular functions not only in skeletal and cardiac muscle development, but also in neuronal differentiation and survival. Plays diverse roles in the control of cell growth, survival and apoptosis via p38 MAPK signaling in muscle-specific and/or growth factor-related transcription. Plays a critical role in the regulation of neuronal apoptosis. The polypeptide is Myocyte-specific enhancer factor 2D (Mef2d) (Mus musculus (Mouse)).